The primary structure comprises 1148 residues: Zinc finger CCCH domain-containing protein 18 (1148 aa).

The span at 1 to 13 (MDTPESPTQSPQS) shows a compositional bias: low complexity. Disordered stretches follow at residues 1 to 315 (MDTP…PMDR), 380 to 417 (DPFS…LPPP), and 521 to 1127 (YTET…REEL). 2 stretches are compositionally biased toward basic and acidic residues: residues 53–73 (VPEH…AGRE) and 82–96 (EDYK…DIHQ). Composition is skewed to acidic residues over residues 144–156 (ERGD…EEDE) and 167–176 (ELEEEEDEEE). A compositionally biased stretch (basic and acidic residues) spans 190–202 (DLKDESSVSRDLD). Acidic residues-rich tracts occupy residues 203 to 214 (EHELDYDEEVPE) and 233 to 245 (EDGE…DEEE). Basic and acidic residues predominate over residues 261 to 289 (DNRDTPLRKSEDSREGGRRDSFRDKKKEE). Acidic residues predominate over residues 290–306 (DDGEIDEGEIDDDDLEE). The span at 388-397 (PPGGAAGGGP) shows a compositional bias: gly residues. The segment covering 530–615 (PDRERERDPR…EKKDEKEKTL (86 aa)) has biased composition (basic and acidic residues). Residues 543 to 584 (RERERERERDHRERERRQREREREREREREKDSRRRKDEWDR) adopt a coiled-coil conformation. The segment covering 622–631 (NMPPRGPMEP) has biased composition (pro residues). Over residues 632-646 (PTKKDMLSVTKRPDE) the composition is skewed to basic and acidic residues. The residue at position 666 (Ser-666) is a Phosphoserine. Over residues 677–740 (SGSSVSLSNS…SRSGSFSSSP (64 aa)) the composition is skewed to low complexity. 2 stretches are compositionally biased toward pro residues: residues 783–800 (KVMP…PPKP) and 807–817 (PPNPRPPGRPP). The segment covering 818 to 833 (GPREPREPPNMREGRK) has biased composition (basic and acidic residues). 3 stretches are compositionally biased toward low complexity: residues 847 to 875 (VSGS…ASRS), 882 to 903 (SLSV…SVRS), and 914 to 925 (ASPVSSASSRSP). Basic and acidic residues-rich tracts occupy residues 933 to 964 (DRGP…KRVD) and 1012 to 1029 (QTDR…KERP). A Phosphoserine modification is found at Ser-1056. 2 stretches are compositionally biased toward low complexity: residues 1083–1098 (PAKS…SAAK) and 1107–1119 (GSAS…KPSS). Positions 1118–1146 (SSTLSRREELLKQLKAVEDAIARKRAKIP) form a coiled coil.

It localises to the nucleus. In Danio rerio (Zebrafish), this protein is Zinc finger CCCH domain-containing protein 18 (zc3h18).